A 945-amino-acid polypeptide reads, in one-letter code: Isoleucine--tRNA ligase (945 aa).

The short motif at 67–77 (PYANGQIHLGH) is the 'HIGH' region element. E573 contributes to the L-isoleucyl-5'-AMP binding site. The 'KMSKS' region motif lies at 614–618 (KMSKS). An ATP-binding site is contributed by K617. C908, C911, C928, and C931 together coordinate Zn(2+).

This sequence belongs to the class-I aminoacyl-tRNA synthetase family. IleS type 1 subfamily. In terms of assembly, monomer. It depends on Zn(2+) as a cofactor.

It is found in the cytoplasm. The enzyme catalyses tRNA(Ile) + L-isoleucine + ATP = L-isoleucyl-tRNA(Ile) + AMP + diphosphate. Functionally, catalyzes the attachment of isoleucine to tRNA(Ile). As IleRS can inadvertently accommodate and process structurally similar amino acids such as valine, to avoid such errors it has two additional distinct tRNA(Ile)-dependent editing activities. One activity is designated as 'pretransfer' editing and involves the hydrolysis of activated Val-AMP. The other activity is designated 'posttransfer' editing and involves deacylation of mischarged Val-tRNA(Ile). The sequence is that of Isoleucine--tRNA ligase from Acinetobacter baylyi (strain ATCC 33305 / BD413 / ADP1).